The following is a 378-amino-acid chain: Chorismate synthase (378 aa).

The tract at residues 37 to 60 (EEEIQKDLTRRRPGQNDLTTPRDE) is disordered. An NADP(+)-binding site is contributed by R47. Residues 124 to 126 (RSS), G289, 304 to 308 (KPTST), and R330 contribute to the FMN site.

The protein belongs to the chorismate synthase family. As to quaternary structure, homotetramer. Requires FMNH2 as cofactor.

The enzyme catalyses 5-O-(1-carboxyvinyl)-3-phosphoshikimate = chorismate + phosphate. Its pathway is metabolic intermediate biosynthesis; chorismate biosynthesis; chorismate from D-erythrose 4-phosphate and phosphoenolpyruvate: step 7/7. Catalyzes the anti-1,4-elimination of the C-3 phosphate and the C-6 proR hydrogen from 5-enolpyruvylshikimate-3-phosphate (EPSP) to yield chorismate, which is the branch point compound that serves as the starting substrate for the three terminal pathways of aromatic amino acid biosynthesis. This reaction introduces a second double bond into the aromatic ring system. This chain is Chorismate synthase, found in Leptospira biflexa serovar Patoc (strain Patoc 1 / Ames).